The primary structure comprises 301 residues: Chitosanase (301 aa).

The signal sequence occupies residues 1 to 42 (MHMSNARPSKSRTKFLLAFLCFTLMASLFGATALFGPSKAAA). The active-site Proton donor is the Glu-79. The cysteines at positions 92 and 166 are disulfide-linked. Asp-97 acts as the Nucleophile in catalysis.

It belongs to the glycosyl hydrolase 46 family.

It is found in the secreted. It carries out the reaction Endohydrolysis of beta-(1-&gt;4)-linkages between D-glucosamine residues in a partly acetylated chitosan.. Aids in the defense against invading fungal pathogens by degrading their cell wall chitosan. In Niallia circulans (Bacillus circulans), this protein is Chitosanase (csn).